A 154-amino-acid chain; its full sequence is Large ribosomal subunit protein bL17 (154 aa).

The tract at residues 125–154 (AASQKSSKQDRAKRVQGSKKNVDAVAESAE) is disordered.

This sequence belongs to the bacterial ribosomal protein bL17 family. Part of the 50S ribosomal subunit. Contacts protein L32.

The polypeptide is Large ribosomal subunit protein bL17 (Chlorobium chlorochromatii (strain CaD3)).